A 375-amino-acid polypeptide reads, in one-letter code: uncharacterized protein (375 aa).

It belongs to the mimivirus L17x/L18x family.

This is an uncharacterized protein from Acanthamoeba polyphaga mimivirus (APMV).